The sequence spans 613 residues: Putative adenosylhomocysteinase 3 (613 aa).

Composition is skewed to low complexity over residues 1-14 and 35-44; these read MSVQ…AAKV and AAAVGAMVPP. The segment at 1-186 is disordered; it reads MSVQVVSAAA…KQQKNSKGSS (186 aa). Serine 2 is modified (N-acetylserine). An LISN domain, inhibits interaction with ITPR1 region spans residues 2–111; that stretch reads SVQVVSAAAA…DGGEALVSPD (110 aa). Positions 52–68 are enriched in pro residues; sequence APAPAPAAERPPAPGPG. The span at 70-80 shows a compositional bias: low complexity; the sequence is GPTAALSPAAG. Serine 109 carries the post-translational modification Phosphoserine. Positions 137-146 are enriched in basic residues; that stretch reads RPTKIGRRSL. Residues 147-166 are compositionally biased toward low complexity; the sequence is SRSISQSSTDSYSSAASYTD. Serine 151, serine 154, serine 157, and serine 160 each carry phosphoserine. 3 residues coordinate substrate: threonine 238, aspartate 312, and glutamate 337. Position 338-340 (338-340) interacts with NAD(+); that stretch reads SVT. Positions 367 and 371 each coordinate substrate. NAD(+) contacts are provided by residues asparagine 372, 403 to 408, glutamate 424, asparagine 459, 480 to 482, and asparagine 527; these read GEVGKG and MGH.

This sequence belongs to the adenosylhomocysteinase family. Homotetramer. Forms heteromultimers with AHCYL1 (via the C-terminal region). Interacts with ITPR1; with lower affinity than AHCYL1 and maybe via ITPR1. Interacts with SLC4A4. Interacts with ZCCHC4. Requires NAD(+) as cofactor. Post-translationally, phosphorylated during neuronal differentiation at the LISN domain. As to expression, highly expressed in cerebrum, cerebellum and kidney. Also expressed in thymus, spleen, testis, ovary and, at lower, levels in lung and liver (at protein level). In cerebellum, expressed in interneurons.

It localises to the cytoplasm. The protein resides in the microsome. It carries out the reaction S-adenosyl-L-homocysteine + H2O = L-homocysteine + adenosine. It participates in amino-acid biosynthesis; L-homocysteine biosynthesis; L-homocysteine from S-adenosyl-L-homocysteine: step 1/1. In terms of biological role, may regulate the electrogenic sodium/bicarbonate cotransporter SLC4A4 activity and Mg(2+)-sensitivity. On the contrary of its homolog AHCYL1, does not regulate ITPR1 sensitivity to inositol 1,4,5-trisphosphate. This is Putative adenosylhomocysteinase 3 (Ahcyl2) from Mus musculus (Mouse).